The primary structure comprises 285 residues: 4-diphosphocytidyl-2-C-methyl-D-erythritol kinase (285 aa).

Lysine 12 is an active-site residue. 94 to 104 (PAQAGMGGGSS) provides a ligand contact to ATP. Residue aspartate 136 is part of the active site.

This sequence belongs to the GHMP kinase family. IspE subfamily.

It carries out the reaction 4-CDP-2-C-methyl-D-erythritol + ATP = 4-CDP-2-C-methyl-D-erythritol 2-phosphate + ADP + H(+). The protein operates within isoprenoid biosynthesis; isopentenyl diphosphate biosynthesis via DXP pathway; isopentenyl diphosphate from 1-deoxy-D-xylulose 5-phosphate: step 3/6. Its function is as follows. Catalyzes the phosphorylation of the position 2 hydroxy group of 4-diphosphocytidyl-2C-methyl-D-erythritol. In Paracidovorax citrulli (strain AAC00-1) (Acidovorax citrulli), this protein is 4-diphosphocytidyl-2-C-methyl-D-erythritol kinase.